We begin with the raw amino-acid sequence, 396 residues long: Deoxyguanosinetriphosphate triphosphohydrolase-like protein (396 aa).

One can recognise an HD domain in the interval 69 to 211 (RLSHSLEVSQ…AALADDIAYN (143 aa)).

The protein belongs to the dGTPase family. Type 2 subfamily.

The polypeptide is Deoxyguanosinetriphosphate triphosphohydrolase-like protein (Parvibaculum lavamentivorans (strain DS-1 / DSM 13023 / NCIMB 13966)).